A 686-amino-acid chain; its full sequence is Probable serine/threonine-protein kinase pdkA (686 aa).

The interval 1–31 (MENIVITNTSGGGGGGVPSSSTDPPNNTTTT) is disordered. The span at 18–31 (PSSSTDPPNNTTTT) shows a compositional bias: low complexity. Residues 69 to 449 (FIIGKVLGEG…FDNLKAHPFF (381 aa)) form the Protein kinase domain. Residues 79–81 (SYG) and lysine 98 contribute to the ATP site. A PIF-pocket region spans residues 100–144 (LEKKQIIKENKIKYVQIEKEIFCKSNHPNIVKLFFTFRSEQCLYY). ATP-binding positions include 147-149 (ELC) and aspartate 153. Aspartate 192 (proton acceptor) is an active-site residue. Glutamate 196 and aspartate 210 together coordinate ATP. Disordered regions lie at residues 211 to 321 (FGTG…NTNT) and 481 to 584 (LFSP…NNIS). Low complexity predominate over residues 222–257 (SSQQQQQQQQQQQQLPTNSSGNLSSLLNNVNNLSVS). Residues 258–267 (TDLTQQQQNR) are compositionally biased toward polar residues. Low complexity-rich tracts occupy residues 268–279 (TSSVDSASTTDS), 288–321 (TTTT…NTNT), and 503–568 (NSCN…QRSG). In terms of domain architecture, PH spans 593–682 (VIYQGLVWKR…DSIKSVILSS (90 aa)).

The protein belongs to the protein kinase superfamily. AGC Ser/Thr protein kinase family. PDPK1 subfamily.

The enzyme catalyses L-seryl-[protein] + ATP = O-phospho-L-seryl-[protein] + ADP + H(+). The catalysed reaction is L-threonyl-[protein] + ATP = O-phospho-L-threonyl-[protein] + ADP + H(+). The sequence is that of Probable serine/threonine-protein kinase pdkA (pdkA) from Dictyostelium discoideum (Social amoeba).